We begin with the raw amino-acid sequence, 115 residues long: Large ribosomal subunit protein eL36 (115 aa).

This sequence belongs to the eukaryotic ribosomal protein eL36 family. Component of the large ribosomal subunit.

It localises to the cytoplasm. The protein localises to the cytosol. In terms of biological role, component of the large ribosomal subunit. In Drosophila melanogaster (Fruit fly), this protein is Large ribosomal subunit protein eL36 (RpL36).